Here is a 990-residue protein sequence, read N- to C-terminus: F-box/LRR-repeat protein 15 (990 aa).

Residues 190-236 (FEVHIDLTDDLLHMVFSFLNHVDLCRSAMVCRQWRVASAHEDFWRVL) form the F-box domain. LRR repeat units lie at residues 237 to 258 (NFENIRISMEQFENMCSRYPNA), 280 to 303 (LRNLEVLTIGKGHISESFFQALGE), 317 to 341 (LGNGAQEIHLSHDRLRELKITKCRV), 348 to 373 (CPQLRSLSLKRSNMSQAMLNCPLLQL), 397 to 423 (LESLDVSNCSCVSDETLREIAQACANL), 441 to 465 (LPMLTVLKLHSCEGITSASMTWIAN), 466 to 477 (SPALEVLELDNC), 478 to 503 (NLLTTVSLHLSRLQSISLVHCRKFTD), 519 to 542 (CPALRRITITSNALRRLALQKQEN), 550 to 574 (CHSLQEVDLSDCESLSNSVCKIFSD), 589 to 612 (CESLTAVRFCNSSLASLSLVGCRA), 614 to 633 (TSLELKCPRIEQICLDGCDH), 640 to 652 (QPVALRSLNLGIC), 653 to 678 (PKLSVLNIEAPYMVSLELKGCGVLSE), 734 to 756 (LPNLTVLDLSYTFLMNLEPVFKS), 758 to 782 (IQLKVLKLQACKYLTDSSLEPLYKE), 785 to 809 (LPALEELDLSYGTLCQTAIDDLLAC), 813 to 839 (LTHLSLNGCVNMHDLDWGSTSVHLFDY), 882 to 893 (FYHLSTLNLSLS), 894 to 914 (VNLKEVDLTCSNLVLLNLSNC), 915 to 937 (CSLEVLKLGCPRLASLFLQSCNM), and 949 to 973 (CSSLETLDLRFCPKISSVSMSKFRT).

This is F-box/LRR-repeat protein 15 (FBL15) from Arabidopsis thaliana (Mouse-ear cress).